The sequence spans 302 residues: Taste receptor type 2 member 104 (302 aa).

Topologically, residues 1–7 (MLSMLES) are extracellular. A helical transmembrane segment spans residues 8 to 28 (ILLSVATSEAMLGILGNIFIV). Over 29–43 (LVNCTNWVRNKKLSK) the chain is Cytoplasmic. A helical transmembrane segment spans residues 44–64 (INFILTGLAISRVFTIWIITL). The Extracellular portion of the chain corresponds to 65 to 87 (DAYTKVFFLTTLMPSNLHECISY). The helical transmembrane segment at 88–108 (IWVIINHLSVWFATSLSIFYF) threads the bilayer. Residues 109-128 (LKIANFSHYIFLWLKRRADK) are Cytoplasmic-facing. The helical transmembrane segment at 129 to 149 (VFVFLIGYLIITWLASFPLAV) threads the bilayer. The Extracellular portion of the chain corresponds to 150–182 (TVIKNIKVHHNNTSWLIQLEKRELLINYVFANM). Asn160 and Asn161 each carry an N-linked (GlcNAc...) asparagine glycan. A helical membrane pass occupies residues 183-203 (GPISLFMVAVFTCFLLTISLW). The Cytoplasmic segment spans residues 204–233 (RHRRRMQSTGSKFRDLNTEVHVKAMKVLIS). A helical transmembrane segment spans residues 234–254 (FIILFILYFMGVLIETLCLFL). Topologically, residues 255 to 257 (TEN) are extracellular. Residues 258 to 278 (ILLFIFGFTLSSTYPCCHSFI) traverse the membrane as a helical segment. The Cytoplasmic segment spans residues 279–302 (LILTSRELKQASMRALQRLKCCET).

This sequence belongs to the G-protein coupled receptor T2R family.

Its subcellular location is the membrane. Its function is as follows. Putative taste receptor which may play a role in the perception of bitterness. The protein is Taste receptor type 2 member 104 of Rattus norvegicus (Rat).